A 259-amino-acid polypeptide reads, in one-letter code: MLKELRQKRPLVHNITNYVAAQFVANGLLALGASPLMSDAIDEMRDLAKISDALAINIGTLNDRAILCAKEAIKHYKALNKPIVLDPVGCSASALRHDTSLELLKSGGISALRGNAAELGSLVGISCESKGLDSNDAATPVEIIKLAAQKYSVIAVMTGKTDYVSDGKKVLSITGGSEYLALITGAGCLHAAACASFLSLKKDPLDSMAQLCALYKQAAFNAQKKVLENNGSNGSFLFYFLDALSLPIELENSLIKEEW.

Substrate is bound at residue M37. Positions 113 and 158 each coordinate ATP. G185 serves as a coordination point for substrate.

The protein belongs to the Thz kinase family. Mg(2+) is required as a cofactor.

It carries out the reaction 5-(2-hydroxyethyl)-4-methylthiazole + ATP = 4-methyl-5-(2-phosphooxyethyl)-thiazole + ADP + H(+). It participates in cofactor biosynthesis; thiamine diphosphate biosynthesis; 4-methyl-5-(2-phosphoethyl)-thiazole from 5-(2-hydroxyethyl)-4-methylthiazole: step 1/1. Catalyzes the phosphorylation of the hydroxyl group of 4-methyl-5-beta-hydroxyethylthiazole (THZ). This is Hydroxyethylthiazole kinase from Helicobacter pylori (strain ATCC 700392 / 26695) (Campylobacter pylori).